The chain runs to 664 residues: Macrolide export ATP-binding/permease protein MacB (664 aa).

Residues Leu-8–Asp-245 enclose the ABC transporter domain. Position 44 to 51 (Gly-44 to Ser-51) interacts with ATP. 4 helical membrane-spanning segments follow: residues Leu-283–Gly-303, Gly-543–Val-563, Ile-602–Ala-622, and Ile-627–Trp-647.

The protein belongs to the ABC transporter superfamily. Macrolide exporter (TC 3.A.1.122) family. As to quaternary structure, homodimer.

The protein resides in the cell inner membrane. Non-canonical ABC transporter that contains transmembrane domains (TMD), which form a pore in the inner membrane, and an ATP-binding domain (NBD), which is responsible for energy generation. Confers resistance against macrolides. This is Macrolide export ATP-binding/permease protein MacB from Chlorobium luteolum (strain DSM 273 / BCRC 81028 / 2530) (Pelodictyon luteolum).